Consider the following 269-residue polypeptide: Enoyl-[acyl-carrier-protein] reductase [NADH] (269 aa).

NAD(+) is bound by residues 20-21 (SI), 64-65 (DV), and 95-96 (IG). Residue tyrosine 158 participates in substrate binding. Positions 165 and 194 each coordinate NAD(+).

The protein belongs to the short-chain dehydrogenases/reductases (SDR) family. FabI subfamily. As to quaternary structure, homodimer. Homotetramer.

The catalysed reaction is a 2,3-saturated acyl-[ACP] + NAD(+) = a (2E)-enoyl-[ACP] + NADH + H(+). The enzyme catalyses a 2,3-saturated acyl-CoA + NAD(+) = a (2E)-enoyl-CoA + NADH + H(+). It functions in the pathway lipid metabolism; mycolic acid biosynthesis. Its function is as follows. Enoyl-ACP reductase of the type II fatty acid syntase (FAS-II) system, which is involved in the biosynthesis of mycolic acids, a major component of mycobacterial cell walls. Catalyzes the NADH-dependent reduction of the double bond of 2-trans-enoyl-[acyl-carrier protein], an essential step in the fatty acid elongation cycle of the FAS-II pathway. Shows preference for long-chain fatty acyl thioester substrates, and can also use 2-trans-enoyl-CoAs as alternative substrates. The mycobacterial FAS-II system utilizes the products of the FAS-I system as primers to extend fatty acyl chain lengths up to C56, forming the meromycolate chain that serves as the precursor for final mycolic acids. Is the primary target of the first-line antitubercular drug isoniazid (INH) and of the second-line drug ethionamide (ETH). Overexpressed inhA confers INH and ETH resistance to M.bovis. The mechanism of isoniazid action against InhA is covalent attachment of the activated form of the drug to the nicotinamide ring of NAD and binding of the INH-NAD adduct to the active site of InhA. Similarly, the ETH-NAD adduct binds InhA. The sequence is that of Enoyl-[acyl-carrier-protein] reductase [NADH] from Mycobacterium bovis (strain ATCC BAA-935 / AF2122/97).